Reading from the N-terminus, the 426-residue chain is Proline--tRNA ligase (426 aa).

Belongs to the class-II aminoacyl-tRNA synthetase family. ProS type 2 subfamily. As to quaternary structure, homodimer.

It localises to the cytoplasm. It carries out the reaction tRNA(Pro) + L-proline + ATP = L-prolyl-tRNA(Pro) + AMP + diphosphate. In terms of biological role, catalyzes the attachment of proline to tRNA(Pro) in a two-step reaction: proline is first activated by ATP to form Pro-AMP and then transferred to the acceptor end of tRNA(Pro). In Ehrlichia ruminantium (strain Gardel), this protein is Proline--tRNA ligase.